A 464-amino-acid chain; its full sequence is Flavin-containing monooxygenase FMO GS-OX-like 7 (464 aa).

18-23 (GAGAAG) is an FAD binding site. 214-219 (GSSVSG) lines the NADP(+) pocket.

Belongs to the FMO family. It depends on FAD as a cofactor.

Catalyzes the conversion of methylthioalkyl glucosinolates of any chain length into methylsulfinylalkyl glucosinolates. The chain is Flavin-containing monooxygenase FMO GS-OX-like 7 from Arabidopsis thaliana (Mouse-ear cress).